A 165-amino-acid polypeptide reads, in one-letter code: Protein SprT (165 aa).

The 144-residue stretch at 20-163 (EKLTQANLKL…RCVHCGEQLV (144 aa)) folds into the SprT-like domain. H78 is a Zn(2+) binding site. E79 is an active-site residue. H82 serves as a coordination point for Zn(2+).

It belongs to the SprT family. Zn(2+) serves as cofactor.

It is found in the cytoplasm. The protein is Protein SprT of Escherichia coli O139:H28 (strain E24377A / ETEC).